The primary structure comprises 500 residues: L-arabinose isomerase (500 aa).

Mn(2+)-binding residues include glutamate 306, glutamate 333, histidine 350, and histidine 450.

The protein belongs to the arabinose isomerase family. Homohexamer. Requires Mn(2+) as cofactor.

It catalyses the reaction beta-L-arabinopyranose = L-ribulose. It functions in the pathway carbohydrate degradation; L-arabinose degradation via L-ribulose; D-xylulose 5-phosphate from L-arabinose (bacterial route): step 1/3. In terms of biological role, catalyzes the conversion of L-arabinose to L-ribulose. This Salmonella choleraesuis (strain SC-B67) protein is L-arabinose isomerase.